A 428-amino-acid chain; its full sequence is MDSDGDDYVMSGSDQEYDDEEREILEDLRKQRKKPHDPVQEVLGFSDDDDDDDDDDEEEQQDVAELMRDSDIEGAEDDDRDLPNTMDWGSKRSTYYNTDFVDQDYSSYNAQEEEQARAEEEEAKKIQLRLAKRMSEADFQLDNVEAAPAGSSDDNELSHITKVTSDLAGLSERERRQLMHSESPEFIILTQDFQQHLDEVKNLLKPVLNYVRKHDVPMVPALQYAGLCHTVLTTYCSNVAFYLLLKARRIDVKAHPVIRRLVQLKDLIEELKPRYEEYIRPQLEALLERIEDGDAFTVLDVAQRKAKLQILNKYNDGQQASVSSDDDDNDDDDDAESKEKDLQEEAGEEEEEEDARRGITYQMAKNKGLTPHRKKELRNPRVKHRGKYRKALIRRKGAVRTVRKELQRYGGELSGIKAGVTKSVKFRT.

The interval Met1–Ser93 is disordered. Composition is skewed to acidic residues over residues Gln15–Ile24 and Ser46–Asp62. Ser152, Ser323, Ser324, and Ser337 each carry phosphoserine. Residues Gly317–Gly386 are disordered. Over residues Ser324–Glu336 the composition is skewed to acidic residues. The span at Glu344 to Glu353 shows a compositional bias: acidic residues. The segment covering Thr370–Gly386 has biased composition (basic residues).

It belongs to the SAS10 family.

The protein resides in the nucleus. Functionally, essential for gene silencing: has a role in the structure of silenced chromatin. May be involved in gene regulation during development. Binds RNA. This is Something about silencing protein 10 from Drosophila melanogaster (Fruit fly).